We begin with the raw amino-acid sequence, 217 residues long: Guanylate kinase (217 aa).

The region spanning 15 to 194 is the Guanylate kinase-like domain; that stretch reads GLMLVLSSPS…AYQRLKRILL (180 aa). An ATP-binding site is contributed by 22–29; sequence SPSGAGKT.

This sequence belongs to the guanylate kinase family.

The protein localises to the cytoplasm. The catalysed reaction is GMP + ATP = GDP + ADP. Essential for recycling GMP and indirectly, cGMP. This is Guanylate kinase from Hyphomonas neptunium (strain ATCC 15444).